The chain runs to 638 residues: 1-deoxy-D-xylulose-5-phosphate synthase (638 aa).

Thiamine diphosphate-binding positions include H71 and 112-114 (SHA). D144 contacts Mg(2+). Thiamine diphosphate contacts are provided by residues 145–146 (GA), N173, Y284, and E365. N173 is a binding site for Mg(2+).

The protein belongs to the transketolase family. DXPS subfamily. As to quaternary structure, homodimer. It depends on Mg(2+) as a cofactor. Thiamine diphosphate serves as cofactor.

The catalysed reaction is D-glyceraldehyde 3-phosphate + pyruvate + H(+) = 1-deoxy-D-xylulose 5-phosphate + CO2. Its pathway is metabolic intermediate biosynthesis; 1-deoxy-D-xylulose 5-phosphate biosynthesis; 1-deoxy-D-xylulose 5-phosphate from D-glyceraldehyde 3-phosphate and pyruvate: step 1/1. Its function is as follows. Catalyzes the acyloin condensation reaction between C atoms 2 and 3 of pyruvate and glyceraldehyde 3-phosphate to yield 1-deoxy-D-xylulose-5-phosphate (DXP). The chain is 1-deoxy-D-xylulose-5-phosphate synthase from Mycobacterium sp. (strain KMS).